Here is a 120-residue protein sequence, read N- to C-terminus: Ragulator complex protein LAMTOR4 homolog (120 aa).

A disordered region spans residues 93 to 120 (QNGVTTTTSSSSSNSVYNDASDSGAVLA). Over residues 97-107 (TTTTSSSSSNS) the composition is skewed to low complexity.

This sequence belongs to the LAMTOR4 family. Part of the Ragulator complex composed of Lamtor3, Lamtor2, CG14184, CG14812, and Lamtor4.

It is found in the lysosome. In terms of biological role, regulator of the TOR pathway, a signaling cascade that promotes cell growth in response to growth factors, energy levels, and amino acids. As part of the Ragulator complex, may activate the TOR signaling cascade in response to amino acids. The polypeptide is Ragulator complex protein LAMTOR4 homolog (Drosophila melanogaster (Fruit fly)).